Consider the following 80-residue polypeptide: Prehead core component PIP (80 aa).

A disordered region spans residues 43 to 80 (FLIEGEEPEDEDEDEDDEDSDDKDDKKDEDSDEDEDDE). Residues 46-64 (EGEEPEDEDEDEDDEDSDD) show a composition bias toward acidic residues.

In terms of biological role, the production of one phage particle requires 250 copies of PIP. During head maturation, PIP is cleaved to form the stable head constituent, internal peptide II. This Escherichia coli (Bacteriophage T4) protein is Prehead core component PIP (67).